Consider the following 132-residue polypeptide: Small ribosomal subunit protein uS8 (132 aa).

In terms of assembly, part of the 30S ribosomal subunit. Contacts proteins S5 and S12. In terms of processing, a modified and unmodified form exist; the nature of the modification(s) is unknown.

One of the primary rRNA binding proteins, it binds directly to 16S rRNA central domain where it helps coordinate assembly of the platform of the 30S subunit. The protein is Small ribosomal subunit protein uS8 of Rhodopseudomonas palustris (strain ATCC BAA-98 / CGA009).